Here is a 281-residue protein sequence, read N- to C-terminus: Nucleotide-binding protein Noc_2797 (281 aa).

8–15 (GVSGSGKS) lines the ATP pocket. 58–61 (DARN) is a GTP binding site.

Belongs to the RapZ-like family.

Functionally, displays ATPase and GTPase activities. The polypeptide is Nucleotide-binding protein Noc_2797 (Nitrosococcus oceani (strain ATCC 19707 / BCRC 17464 / JCM 30415 / NCIMB 11848 / C-107)).